The chain runs to 325 residues: Lipid droplet-associated hydrolase (325 aa).

Ser-139 functions as the Nucleophile in the catalytic mechanism. Active-site charge relay system residues include Asp-271 and His-300.

It belongs to the AB hydrolase superfamily. LDAH family.

It localises to the lipid droplet. The protein resides in the endoplasmic reticulum. It carries out the reaction a cholesterol ester + H2O = cholesterol + a fatty acid + H(+). Probable serine lipid hydrolase associated with lipid droplets. Has low cholesterol esterase activity. Appears to lack triglyceride lipase activity. Involved in cholesterol and triglyceride homeostasis; stimulates cellular triglyceride accumulation and cellular cholesterol release. Acts antagonistically with PNPLA2/ATGL in regulation of cellular lipid stores. May regulate triglyceride accumulation indirectly through stimulation of PNPLA2/ATGL ubiquitination and proteasomal degradation. Promotes microtubule-dependent lipid droplet fusion. Highly expressed in macrophage-rich areas in atherosclerotic lesions, suggesting that it could promote cholesterol ester turnover in macrophages. The chain is Lipid droplet-associated hydrolase from Rattus norvegicus (Rat).